The chain runs to 64 residues: Large ribosomal subunit protein bL35 (64 aa).

This sequence belongs to the bacterial ribosomal protein bL35 family.

This Shewanella loihica (strain ATCC BAA-1088 / PV-4) protein is Large ribosomal subunit protein bL35.